The primary structure comprises 249 residues: Triosephosphate isomerase (249 aa).

9–11 (NWK) contacts substrate. The active-site Electrophile is His-94. The active-site Proton acceptor is Glu-166. Substrate is bound by residues Gly-172, Ser-212, and 233-234 (GG).

This sequence belongs to the triosephosphate isomerase family. As to quaternary structure, homodimer.

The protein localises to the cytoplasm. The enzyme catalyses D-glyceraldehyde 3-phosphate = dihydroxyacetone phosphate. Its pathway is carbohydrate biosynthesis; gluconeogenesis. It functions in the pathway carbohydrate degradation; glycolysis; D-glyceraldehyde 3-phosphate from glycerone phosphate: step 1/1. Its function is as follows. Involved in the gluconeogenesis. Catalyzes stereospecifically the conversion of dihydroxyacetone phosphate (DHAP) to D-glyceraldehyde-3-phosphate (G3P). The chain is Triosephosphate isomerase from Treponema pallidum (strain Nichols).